Consider the following 65-residue polypeptide: Small hydrophobic protein (65 aa).

Topologically, residues 1–20 (MGNTSITIEFTSKFWPYFTL) are intravirion. The tract at residues 6-15 (ITIEFTSKFW) is interaction with host BCAP31. Residues 21-44 (IHMILTLISLLIIITIMIAILNKL) traverse the membrane as a helical; Signal-anchor for type II membrane protein segment. The interval 38-43 (IAILNK) is interaction with small-molecule inhibitor. The Virion surface portion of the chain corresponds to 45 to 65 (SEHKTFCNNTLELGQMHQINT). Asparagine 52 is a glycosylation site (N-linked (GlcNAc...) asparagine; by host).

This sequence belongs to the orthopneumovirus small hydrophobic protein family. In terms of assembly, homopentamer forming a funnel-like pore. Interacts with glycoprotein G; this interaction occurs on the surface of virion particles and infected cells. Interacts with host BCAP31 (via C-terminus); this interaction is direct. Four species of SH have been detected in infected cell cytoplasm: a 7.5 kDa non-glycosylated form (SH0), a 13-15 kDa form that contains one or two N-linked carbohydrate side chains of the high-mannose type (SHg), a 21-30 kDa polylactosaminoglycan-modified form of the protein (SHp), and the isoform generated by alternative translational initiation. Of these different forms, SH0 is by far the most abundant protein detected during virus infection. Post-translationally, tyrosine phosphorylated.

It is found in the virion membrane. The protein localises to the host cell membrane. Its subcellular location is the host Golgi apparatus membrane. It localises to the host endoplasmic reticulum membrane. Its activity is regulated as follows. Channel activity is inhibited by copper. Also inhibited by small-molecule pyronin B. Its function is as follows. Viroporin that forms a homopentameric ion channel displaying low ion selectivity. May play a role in virus morphogenesis and pathogenicity at various stages of the viral life cycle. Accumulates at the membrane of the Golgi apparatus in infected cells and may facilitate virus release by modifying the secretory pathway. May enhance host membrane permeability and disrupt cellular ion homeostasis, which can be sensed as damage-associated molecular patterns/danger signals, triggering NLRP3 inflammasome activation and inflammatory immune response. Also inhibits host TNFA-mediated signaling pathway and may delay apoptosis, allowing time for the virus to replicate. The polypeptide is Small hydrophobic protein (Homo sapiens (Human)).